A 181-amino-acid polypeptide reads, in one-letter code: Adenine phosphoribosyltransferase (181 aa).

It belongs to the purine/pyrimidine phosphoribosyltransferase family. Homodimer.

The protein resides in the cytoplasm. It carries out the reaction AMP + diphosphate = 5-phospho-alpha-D-ribose 1-diphosphate + adenine. It participates in purine metabolism; AMP biosynthesis via salvage pathway; AMP from adenine: step 1/1. Its function is as follows. Catalyzes a salvage reaction resulting in the formation of AMP, that is energically less costly than de novo synthesis. This is Adenine phosphoribosyltransferase from Methylobacterium sp. (strain 4-46).